The primary structure comprises 232 residues: 7-cyano-7-deazaguanine synthase (232 aa).

Phe-8–Leu-18 is an ATP binding site. The Zn(2+) site is built by Cys-188, Cys-197, Cys-200, and Cys-203.

The protein belongs to the QueC family. Requires Zn(2+) as cofactor.

It catalyses the reaction 7-carboxy-7-deazaguanine + NH4(+) + ATP = 7-cyano-7-deazaguanine + ADP + phosphate + H2O + H(+). Its pathway is purine metabolism; 7-cyano-7-deazaguanine biosynthesis. Functionally, catalyzes the ATP-dependent conversion of 7-carboxy-7-deazaguanine (CDG) to 7-cyano-7-deazaguanine (preQ(0)). This chain is 7-cyano-7-deazaguanine synthase, found in Buchnera aphidicola subsp. Schizaphis graminum (strain Sg).